A 541-amino-acid polypeptide reads, in one-letter code: Effector protein hopAB1 (541 aa).

3 disordered regions span residues 1 to 94 (MPGI…EAQQ), 168 to 222 (QRAL…RHPQ), and 317 to 338 (RQTT…SGRR). Residues 18 to 31 (TDGEPVTEREHDSS) show a composition bias toward basic and acidic residues. The span at 183–196 (SSSGSSQRSLIGRS) shows a compositional bias: low complexity.

This sequence belongs to the HopAB family.

Its subcellular location is the secreted. Functionally, effector protein that plays different roles depending on the species and plant cultivars that interact with the pathogen. Acts as a virulence determinant by enhancing the development of disease symptoms and bacterial growth. Acts as an avirulence factor by eliciting hypersensitive response (HR) and plant resistance. The sequence is that of Effector protein hopAB1 (hopAB1) from Pseudomonas savastanoi (Pseudomonas syringae pv. savastanoi).